The following is a 138-amino-acid chain: Growth factor (138 aa).

The N-terminal stretch at methionine 1–alanine 19 is a signal peptide. An N-linked (GlcNAc...) asparagine; by host glycan is attached at asparagine 34. The EGF-like domain maps to alanine 41–glutamine 81. 3 disulfide bridges follow: cysteine 45-cysteine 58, cysteine 53-cysteine 69, and cysteine 71-cysteine 80. Asparagine 95 carries an N-linked (GlcNAc...) asparagine; by host glycan.

The protein belongs to the orthopoxvirus OPG019 family.

Its subcellular location is the secreted. Functionally, stimulates cellular proliferation (hyperplasia)and mobility around infected cells to promote rapid and efficient spread of infection. In Rabbitpox virus (strain Utrecht) (RPV), this protein is Growth factor (OPG019).